The following is a 124-amino-acid chain: Small ribosomal subunit protein uS12 (124 aa).

D89 bears the 3-methylthioaspartic acid mark.

This sequence belongs to the universal ribosomal protein uS12 family. In terms of assembly, part of the 30S ribosomal subunit. Contacts proteins S8 and S17. May interact with IF1 in the 30S initiation complex.

With S4 and S5 plays an important role in translational accuracy. In terms of biological role, interacts with and stabilizes bases of the 16S rRNA that are involved in tRNA selection in the A site and with the mRNA backbone. Located at the interface of the 30S and 50S subunits, it traverses the body of the 30S subunit contacting proteins on the other side and probably holding the rRNA structure together. The combined cluster of proteins S8, S12 and S17 appears to hold together the shoulder and platform of the 30S subunit. This chain is Small ribosomal subunit protein uS12, found in Aliivibrio fischeri (strain ATCC 700601 / ES114) (Vibrio fischeri).